Here is a 214-residue protein sequence, read N- to C-terminus: Sugar transporter SWEET1 (214 aa).

A run of 7 helical transmembrane segments spans residues 3–23, 38–58, 65–85, 93–113, 125–145, 157–177, and 181–201; these read WMWL…SSGL, IQFL…YYGY, LIIV…AYIL, VVSQ…YFTL, LGLF…ADLA, SFPL…YGWV, and LYIT…FWLF. The 84-residue stretch at 6-89 folds into the MtN3/slv 1 domain; that stretch reads LLSGACIVFT…MAAYILYSLE (84 aa). Residues 124 to 207 form the MtN3/slv 2 domain; that stretch reads QLGLFCSIFT…FWLFSRYPPD (84 aa).

The protein belongs to the SWEET sugar transporter family.

The protein resides in the golgi apparatus membrane. Its subcellular location is the cell membrane. In terms of biological role, mediates sugar transport across membranes. The chain is Sugar transporter SWEET1 (slc50a1) from Xenopus tropicalis (Western clawed frog).